The primary structure comprises 459 residues: Argininosuccinate lyase (459 aa).

It belongs to the lyase 1 family. Argininosuccinate lyase subfamily.

The protein resides in the cytoplasm. It catalyses the reaction 2-(N(omega)-L-arginino)succinate = fumarate + L-arginine. It participates in amino-acid biosynthesis; L-arginine biosynthesis; L-arginine from L-ornithine and carbamoyl phosphate: step 3/3. This Desulforudis audaxviator (strain MP104C) protein is Argininosuccinate lyase.